Reading from the N-terminus, the 71-residue chain is MRQEIHPKYTEVTVTCSCGNTFVTRSTVGKKEMNIDICSECHPFYTGKQRIVDTAGRVDKFKKRFGGMKKI.

Zn(2+) is bound by residues Cys16, Cys18, Cys38, and Cys41.

Belongs to the bacterial ribosomal protein bL31 family. Type A subfamily. As to quaternary structure, part of the 50S ribosomal subunit. It depends on Zn(2+) as a cofactor.

In terms of biological role, binds the 23S rRNA. The polypeptide is Large ribosomal subunit protein bL31 (Francisella tularensis subsp. novicida (strain U112)).